The following is a 370-amino-acid chain: Chaperone protein DnaJ (370 aa).

Residues Asp6–Gly70 form the J domain. Residues Gly134–Arg216 form a CR-type zinc finger. Zn(2+) contacts are provided by Cys147, Cys150, Cys164, Cys167, Cys190, Cys193, Cys204, and Cys207. CXXCXGXG motif repeat units lie at residues Cys147 to Gly154, Cys164 to Gly171, Cys190 to Gly197, and Cys204 to Gly211.

It belongs to the DnaJ family. In terms of assembly, homodimer. It depends on Zn(2+) as a cofactor.

The protein localises to the cytoplasm. Its function is as follows. Participates actively in the response to hyperosmotic and heat shock by preventing the aggregation of stress-denatured proteins and by disaggregating proteins, also in an autonomous, DnaK-independent fashion. Unfolded proteins bind initially to DnaJ; upon interaction with the DnaJ-bound protein, DnaK hydrolyzes its bound ATP, resulting in the formation of a stable complex. GrpE releases ADP from DnaK; ATP binding to DnaK triggers the release of the substrate protein, thus completing the reaction cycle. Several rounds of ATP-dependent interactions between DnaJ, DnaK and GrpE are required for fully efficient folding. Also involved, together with DnaK and GrpE, in the DNA replication of plasmids through activation of initiation proteins. The polypeptide is Chaperone protein DnaJ (Erysipelothrix rhusiopathiae).